Reading from the N-terminus, the 83-residue chain is Conotoxin p21a (83 aa).

4-hydroxyproline; partial occurs at positions 24 and 43. Histidine amide is present on His-83.

As to quaternary structure, may form a non-covalent dimer. In terms of processing, contains 5 disulfide bonds. As to expression, expressed by the venom duct.

It localises to the secreted. This Conus purpurascens (Purple cone) protein is Conotoxin p21a.